The chain runs to 780 residues: ATP-dependent 6-phosphofructokinase, muscle type (780 aa).

T2 is modified (N-acetylthreonine). Positions 2–390 (THEEHHAAKT…NWEVYKLLAH (389 aa)) are N-terminal catalytic PFK domain 1. Residues G25, 88–89 (RC), and 118–121 (GDGS) each bind ATP. Residue D119 participates in Mg(2+) binding. A Phosphoserine modification is found at S133. Substrate contacts are provided by residues 164–166 (SID), R201, 208–210 (MGR), E264, R292, and 298–301 (HVQR). The active-site Proton acceptor is D166. The residue at position 377 (S377) is a Phosphoserine. The interdomain linker stretch occupies residues 391–401 (VRPPVSKGGLH). Positions 402–780 (TVAVMNVGAP…SRKRSGEAAV (379 aa)) are C-terminal regulatory PFK domain 2. Residues R471 and 528–532 (TVSNN) each bind beta-D-fructose 2,6-bisphosphate. O-linked (GlcNAc) serine glycosylation occurs at S530. K557 is modified (N6-(2-hydroxyisobutyryl)lysine). Residues R566, 573–575 (MGG), E629, R655, and 661–664 (HMQQ) each bind beta-D-fructose 2,6-bisphosphate. S667 carries the post-translational modification Phosphoserine. R735 contributes to the beta-D-fructose 2,6-bisphosphate binding site. Phosphoserine is present on S775.

This sequence belongs to the phosphofructokinase type A (PFKA) family. ATP-dependent PFK group I subfamily. Eukaryotic two domain clade 'E' sub-subfamily. In terms of assembly, homo- and heterotetramers. Phosphofructokinase (PFK) enzyme functions as a tetramer composed of different combinations of 3 types of subunits, called PFKM (M), PFKL (L) and PFKP (P). The composition of the PFK tetramer differs according to the tissue type it is present in. The kinetic and regulatory properties of the tetrameric enzyme are dependent on the subunit composition, hence can vary across tissues. Isoform 2 and isoform 3 interact (via N-terminal testis-specific region) with GSTM5. Isoform 2 and isoform 3 interact (via C-terminus) with HK1 (via N-terminal spermatogenic cell-specific region). Requires Mg(2+) as cofactor. Post-translationally, glcNAcylation decreases enzyme activity. As to expression, isoform 1 is expressed in skeletal muscle (at protein level). Isoform 2 and isoform 3 are testis-specific and are detected in quiescent sperm (at protein level). They are first detected in the cytoplasm of round spermatids and subsequently in the flagellum of elongated spermatids extending into the seminiferous tubule lumen (at protein level). Isoform 2 is expressed at higher level than isoform 3 in testis.

It is found in the cytoplasm. The protein localises to the cell projection. Its subcellular location is the cilium. The protein resides in the flagellum. It catalyses the reaction beta-D-fructose 6-phosphate + ATP = beta-D-fructose 1,6-bisphosphate + ADP + H(+). It participates in carbohydrate degradation; glycolysis; D-glyceraldehyde 3-phosphate and glycerone phosphate from D-glucose: step 3/4. Allosterically activated by ADP, AMP, or fructose 2,6-bisphosphate, and allosterically inhibited by ATP or citrate. Catalyzes the phosphorylation of D-fructose 6-phosphate to fructose 1,6-bisphosphate by ATP, the first committing step of glycolysis. In Mus musculus (Mouse), this protein is ATP-dependent 6-phosphofructokinase, muscle type (Pfkm).